We begin with the raw amino-acid sequence, 148 residues long: Macrodomain Ter protein (148 aa).

The protein belongs to the MatP family. In terms of assembly, homodimer.

Its subcellular location is the cytoplasm. In terms of biological role, required for spatial organization of the terminus region of the chromosome (Ter macrodomain) during the cell cycle. Prevents early segregation of duplicated Ter macrodomains during cell division. Binds specifically to matS, which is a 13 bp signature motif repeated within the Ter macrodomain. This is Macrodomain Ter protein from Haemophilus influenzae (strain PittGG).